A 352-amino-acid chain; its full sequence is Deoxyhypusine synthase-like protein (352 aa).

This sequence belongs to the deoxyhypusine synthase family.

This chain is Deoxyhypusine synthase-like protein, found in Coxiella burnetii (strain Dugway 5J108-111).